The chain runs to 130 residues: uncharacterized protein (130 aa).

Over 1-58 (MREQLKLFTREIVDFTFLILSGFDYYQTLLISSNSSKKRPKDSSLLSEKKKKKKKKKK) the chain is Cytoplasmic. Positions 34–57 (NSSKKRPKDSSLLSEKKKKKKKKK) are disordered. The helical transmembrane segment at 59–79 (DVLSYLSYLKDLPFVPFLFWQ) threads the bilayer. Residues 80–94 (PGYSQREKNPRQHSL) are Extracellular-facing. Residues 95 to 115 (FIMTITKPGMISMADMNYVVS) form a helical membrane-spanning segment. Residues 116 to 130 (KNRSLNRPAERGGNR) are Cytoplasmic-facing.

The protein localises to the membrane. This is an uncharacterized protein from Saccharomyces cerevisiae (strain ATCC 204508 / S288c) (Baker's yeast).